Reading from the N-terminus, the 466-residue chain is MRLLGRYLRLGSPRLCSRVWPTLPPSCSPHSTAAAAQAQGALSFSDGGVFKLKSSWEVARGLLIFRMCSFPSLVKHSEKMLSVSRRLLGRRLFEWGMKGSVYGQFVAGETLPEIRVCVDRLRQLGIHPMLAVPIEEDLGQAKSGERWYEQNESIMLDCVDLSAAGGDRPMMQLKITALMSAELCKLLSVHLSHPSNGPQLCPRSIVSIMEGKESAFSFLSEGENSHLRNSVRRLSRIAKHATANRVRVLVDAEYTYMNPALSLVTMAMMSQCNQSEPWIWNTYQCYLKDSFSLLSLDLDTARSLGLCFGVKLVRGAYMDKERKLSKQKGYADPIQHDWEATNRSYQRSLDKMLDLIGQNGQRHNLIVASHNEESVLHAVTRMAELGIDKGSGSVSFGQLLGMCDHVSLTLGQAGYLVYKSLPYGSVDSVLPYLIRRAQENQSVLQGIRKERDLLRRELKRRLFNQR.

The protein belongs to the proline oxidase family. Requires FAD as cofactor.

It catalyses the reaction trans-4-hydroxy-L-proline + a quinone = (3R,5S)-1-pyrroline-3-hydroxy-5-carboxylate + a quinol + H(+). The catalysed reaction is L-proline + a quinone = (S)-1-pyrroline-5-carboxylate + a quinol + H(+). It functions in the pathway amino-acid degradation; L-proline degradation into L-glutamate; L-glutamate from L-proline: step 1/2. Its function is as follows. Dehydrogenase that converts trans-4-L-hydroxyproline to delta-1-pyrroline-3-hydroxy-5-carboxylate (Hyp) using a quinone as the terminal electron acceptor. Can also use proline as a substrate but with a very much lower efficiency. Does not react with other diastereomers of Hyp: trans-4-D-hydroxyproline and cis-4-L-hydroxyproline. The sequence is that of Hydroxyproline dehydrogenase (prodh2) from Xenopus laevis (African clawed frog).